A 501-amino-acid chain; its full sequence is Ribose import ATP-binding protein RbsA (501 aa).

2 ABC transporter domains span residues L5–K241 and A252–L495. G37–S44 contacts ATP.

It belongs to the ABC transporter superfamily. Ribose importer (TC 3.A.1.2.1) family. The complex is composed of an ATP-binding protein (RbsA), two transmembrane proteins (RbsC) and a solute-binding protein (RbsB).

Its subcellular location is the cell inner membrane. It catalyses the reaction D-ribose(out) + ATP + H2O = D-ribose(in) + ADP + phosphate + H(+). Functionally, part of the ABC transporter complex RbsABC involved in ribose import. Responsible for energy coupling to the transport system. This chain is Ribose import ATP-binding protein RbsA, found in Salmonella typhi.